A 278-amino-acid polypeptide reads, in one-letter code: Phosphatidylglycerol--prolipoprotein diacylglyceryl transferase (278 aa).

The next 4 helical transmembrane spans lie at 17–37 (LAVR…ILLG), 57–77 (ALFY…VLFY), 89–109 (ILAI…VAIA), and 119–139 (LSWL…LGAG). Residue R140 coordinates a 1,2-diacyl-sn-glycero-3-phospho-(1'-sn-glycerol). The next 3 membrane-spanning stretches (helical) occupy residues 174–194 (QLYE…LYSA), 200–220 (GAVT…CEFF), and 233–253 (LGIS…IALL).

Belongs to the Lgt family.

The protein resides in the cell inner membrane. It carries out the reaction L-cysteinyl-[prolipoprotein] + a 1,2-diacyl-sn-glycero-3-phospho-(1'-sn-glycerol) = an S-1,2-diacyl-sn-glyceryl-L-cysteinyl-[prolipoprotein] + sn-glycerol 1-phosphate + H(+). Its pathway is protein modification; lipoprotein biosynthesis (diacylglyceryl transfer). In terms of biological role, catalyzes the transfer of the diacylglyceryl group from phosphatidylglycerol to the sulfhydryl group of the N-terminal cysteine of a prolipoprotein, the first step in the formation of mature lipoproteins. The polypeptide is Phosphatidylglycerol--prolipoprotein diacylglyceryl transferase (Nitrosomonas europaea (strain ATCC 19718 / CIP 103999 / KCTC 2705 / NBRC 14298)).